Consider the following 645-residue polypeptide: DEAD-box ATP-dependent RNA helicase 46 (645 aa).

Disordered regions lie at residues 1 to 22 (MAATASAIRYAPEDPNLPKPWK) and 44 to 137 (YERP…AGNE). A WW domain is found at 15–49 (PNLPKPWKGLVDSRTGYLYFWNPETNVTQYERPAS). Positions 60 to 72 (VSSSVQTNQQSSS) are enriched in low complexity. The span at 77–91 (GKEDDKYGRGSDGPK) shows a compositional bias: basic and acidic residues. The segment covering 108–136 (SSNDAASGLGNASSGGSSARGPPSSAAGN) has biased composition (low complexity). The Q motif signature appears at 161–189 (MSFEATGLPNELLREVYSAGFSAPSPIQA). The 175-residue stretch at 192–366 (WPIAMQNRDI…ADLLVNPAQV (175 aa)) folds into the Helicase ATP-binding domain. 205-212 (AKTGSGKT) contributes to the ATP binding site. The short motif at 314–317 (DEAD) is the DEAD box element. The 145-residue stretch at 395 to 539 (RLEQILRSQE…KVPPQVREMA (145 aa)) folds into the Helicase C-terminal domain. The disordered stretch occupies residues 532–645 (PPQVREMATR…FHEAMMMKNR (114 aa)). Gly residues predominate over residues 556-597 (SSGGGGGRGGYGDSGYGGRGESGYGSRGDSGYGGRGDSGGRG). The span at 598-608 (SWAPSRDSSGS) shows a compositional bias: low complexity. The segment covering 612-623 (GRERSRSPERFR) has biased composition (basic and acidic residues). The segment covering 624–634 (GGPPSTSSPPR) has biased composition (low complexity).

It belongs to the DEAD box helicase family. DDX5/DBP2 subfamily.

The enzyme catalyses ATP + H2O = ADP + phosphate + H(+). The chain is DEAD-box ATP-dependent RNA helicase 46 (RH46) from Arabidopsis thaliana (Mouse-ear cress).